We begin with the raw amino-acid sequence, 372 residues long: DSC E3 ubiquitin ligase complex subunit 2 (372 aa).

A run of 5 helical transmembrane segments spans residues valine 26–leucine 46, isoleucine 54–isoleucine 74, tyrosine 95–phenylalanine 115, threonine 126–valine 146, and valine 160–leucine 180. The interval threonine 246–tyrosine 314 is disordered. A compositionally biased stretch (polar residues) spans glutamate 249–glutamine 268. Position 264 is a phosphoserine (serine 264). Threonine 266 carries the phosphothreonine modification. Over residues asparagine 269 to serine 284 the composition is skewed to low complexity. Positions arginine 286–leucine 305 are enriched in polar residues. Positions glutamate 332–glutamine 368 constitute a UBA domain.

Component of the DSC E3 ubiquitin ligase complex composed of dsc1, dsc2, dsc3 and dsc4.

The protein resides in the golgi apparatus membrane. The enzyme catalyses S-ubiquitinyl-[E2 ubiquitin-conjugating enzyme]-L-cysteine + [acceptor protein]-L-lysine = [E2 ubiquitin-conjugating enzyme]-L-cysteine + N(6)-ubiquitinyl-[acceptor protein]-L-lysine.. Its pathway is protein modification; protein ubiquitination. Component of the DSC E3 ubiquitin ligase complex which is required for the sre1 transcriptional activator proteolytic cleavage to release the soluble transcription factor from the membrane in low oxygen or sterol conditions. The complex also plays an important role in the multivesicular body (MVB) pathway and functions in a post-endoplasmic reticulum pathway for protein degradation. The sequence is that of DSC E3 ubiquitin ligase complex subunit 2 (dsc2) from Schizosaccharomyces pombe (strain 972 / ATCC 24843) (Fission yeast).